A 53-amino-acid chain; its full sequence is MLRYALIFFIIAIIAAVLGFGGIAAGAAEIAKILFYIFVVIFLVTLVLGVARR.

Helical transmembrane passes span 5 to 25 and 30 to 50; these read ALIF…GIAA and IAKI…VLGV.

Belongs to the UPF0391 family.

The protein resides in the cell membrane. This chain is UPF0391 membrane protein BURPS1106A_A2993, found in Burkholderia pseudomallei (strain 1106a).